The following is a 502-amino-acid chain: Neuronal acetylcholine receptor subunit alpha-7 (502 aa).

Positions 1–22 (MCGGRGGIWLALAAALLHVSLQ) are cleaved as a signal peptide. The Extracellular portion of the chain corresponds to 23-233 (GEFQRRLYKE…VTMRRRTLYY (211 aa)). Residues Arg42 and Val44 each coordinate Ca(2+). N-linked (GlcNAc...) asparagine glycans are attached at residues Asn46, Asn90, and Asn133. Cys150 and Cys164 are joined by a disulfide. Residues Ser172 and Tyr210 each coordinate Ca(2+). Cys212 and Cys213 are oxidised to a cystine. Transmembrane regions (helical) follow at residues 234-254 (GLNLLIPCVLISALALLVFLL), 262-282 (ISLGITVLLSLTVFMLLVAEI), and 295-315 (QYFASTMIIVGLSVVVTVIVL). Residues 260-267 (EKISLGIT) form an essential for TMEM35A/NACHO-mediated proper subunit assembly and trafficking to cell membrane region. At 316 to 469 (RYHHHDPDGG…WKFAACVVDR (154 aa)) the chain is on the cytoplasmic side. The helical transmembrane segment at 470 to 490 (LCLMAFSVFTIICTIGILMSA) threads the bilayer.

It belongs to the ligand-gated ion channel (TC 1.A.9) family. Acetylcholine receptor (TC 1.A.9.1) subfamily. Alpha-7/CHRNA7 sub-subfamily. As to quaternary structure, homopentamer. Can also form heteropentamers with CHRNB2, mainly found in basal forebrain cholinergic neurons. Interacts with RIC3; which is required for proper folding and assembly. Interacts with LYPD6. Interacts with CANX. Glycosylations at Asn-46, Asn-90 and Asn-133 are essential for TMEM35A/NACHO-mediated proper subunit assembly and trafficking to the cell membrane. In terms of tissue distribution, expressed in neurons. Expressed in umbrella cells of urothelium (at protein level).

It localises to the postsynaptic cell membrane. Its subcellular location is the cell membrane. It carries out the reaction Ca(2+)(in) = Ca(2+)(out). The catalysed reaction is K(+)(in) = K(+)(out). It catalyses the reaction Na(+)(in) = Na(+)(out). The enzyme catalyses choline(out) = choline(in). It carries out the reaction NH4(+)(in) = NH4(+)(out). The catalysed reaction is L-arginine(in) = L-arginine(out). It catalyses the reaction guanidine(out) = guanidine(in). Its activity is regulated as follows. Activated by a myriad of ligands such as acetylcholine, cytisine, nicotine, choline and epibatidine. Oligomeric amyloid-beta protein 42 activates specifially CHRNA7:CHRNB2 nAchRs. Activity is modulated by positive allosteric modulators (PAMs), such as flavonoids, with a wide range of chemical diversity, pharmacological sensitivity and efficacy. AChR activity is inhibited by the antagonists alpha-conotoxons RgIA, ImI and ImII, small disulfide-constrained peptides from cone snails. Alpha-conotoxin PnIC selectively inhibits CHRNA7:CHRNB2 over CHRNA7 homopentamer. In terms of biological role, component of neuronal acetylcholine receptors (nAChRs) that function as pentameric, ligand-gated cation channels with high calcium permeability among other activities. nAChRs are excitatory neurotrasnmitter receptors formed by a collection of nAChR subunits known to mediate synaptic transmission in the nervous system and the neuromuscular junction. Each nAchR subunit confers differential attributes to channel properties, including activation, deactivation and desensitization kinetics, pH sensitivity, cation permeability, and binding to allosteric modulators. CHRNA7 forms homopentameric neuronal acetylcholine receptors abundantly expressed in the central nervous system, characterized by fast desensitization and high calcium permeability. Also forms heteropentamers with CHRNB2, mainly expressed in basal forebrain cholinergic neurons. Involved in the modulation of calcium-dependent signaling pathways and influences the release of neurotransmitters, including dopamine, glutamate and GABA. Also expressed in non-neuronal cells such as immune cells like lymphocytes, monocytes and macrophages. In T cells, activation induces metabotropic signaling that results in an increase of intracellular Ca2+ concentrations, independent of ionotropic receptor functions. In macrophages, required for acetylcholine-mediated inhibition of TNF and other inflammatory cytokine release. Once activated by acetylcholine, nicotine or other agonists, selectively inhibits production of pro-inflammatory cytokines while leaving anti-inflammatory cytokines undisturbed. Stimulates the cholinergic anti-inflammatory pathway, controlling inflammation by inhibiting NFKB nuclear translocation and activating the JAK2-STAT3 pathway, independently of ion channel activity. Also expressed in the urothelium where it modulates reflex bladder activity by increasing intracellular calcium through internal stores and decreasing basal ATP release. The chain is Neuronal acetylcholine receptor subunit alpha-7 (Chrna7) from Rattus norvegicus (Rat).